We begin with the raw amino-acid sequence, 460 residues long: GTPase Der (460 aa).

2 consecutive EngA-type G domains span residues 9-171 and 199-370; these read KTIA…SLNQ and IQVG…ECFS. Residues 15 to 22, 62 to 66, 123 to 126, 205 to 212, 252 to 256, and 316 to 319 contribute to the GTP site; these read GQPNVGKS, DTGGM, NKID, GRVNVGKS, DTAGI, and NKWD. A KH-like domain is found at 371–455; that stretch reads RRIPTSLLNS…PLILNAKDKK (85 aa).

Belongs to the TRAFAC class TrmE-Era-EngA-EngB-Septin-like GTPase superfamily. EngA (Der) GTPase family. In terms of assembly, associates with the 50S ribosomal subunit.

Functionally, GTPase that plays an essential role in the late steps of ribosome biogenesis. In Helicobacter pylori (strain G27), this protein is GTPase Der.